A 308-amino-acid polypeptide reads, in one-letter code: Aspartate carbamoyltransferase catalytic subunit (308 aa).

Residues Arg55 and Thr56 each coordinate carbamoyl phosphate. Lys83 is an L-aspartate binding site. Residues Arg105, His133, and Gln136 each contribute to the carbamoyl phosphate site. Residues Arg166 and Arg220 each coordinate L-aspartate. 2 residues coordinate carbamoyl phosphate: Gly261 and Pro262.

The protein belongs to the aspartate/ornithine carbamoyltransferase superfamily. ATCase family. Heterododecamer (2C3:3R2) of six catalytic PyrB chains organized as two trimers (C3), and six regulatory PyrI chains organized as three dimers (R2).

It catalyses the reaction carbamoyl phosphate + L-aspartate = N-carbamoyl-L-aspartate + phosphate + H(+). The protein operates within pyrimidine metabolism; UMP biosynthesis via de novo pathway; (S)-dihydroorotate from bicarbonate: step 2/3. Its function is as follows. Catalyzes the condensation of carbamoyl phosphate and aspartate to form carbamoyl aspartate and inorganic phosphate, the committed step in the de novo pyrimidine nucleotide biosynthesis pathway. In Chlorobium limicola (strain DSM 245 / NBRC 103803 / 6330), this protein is Aspartate carbamoyltransferase catalytic subunit.